The following is a 486-amino-acid chain: Small ribosomal subunit protein uS4m (486 aa).

The S4 RNA-binding domain maps to 103–172 (KRLDFALFRA…AKKPSFQEAL (70 aa)).

This sequence belongs to the universal ribosomal protein uS4 family. In terms of assembly, component of the mitochondrial small ribosomal subunit (mt-SSU). Mature yeast 74S mitochondrial ribosomes consist of a small (37S) and a large (54S) subunit. The 37S small subunit contains a 15S ribosomal RNA (15S mt-rRNA) and 34 different proteins. The 54S large subunit contains a 21S rRNA (21S mt-rRNA) and 46 different proteins. uS3m, uS4m and uS5m form the narrow entry site of the mRNA channel.

The protein localises to the mitochondrion. In terms of biological role, component of the mitochondrial ribosome (mitoribosome), a dedicated translation machinery responsible for the synthesis of mitochondrial genome-encoded proteins, including at least some of the essential transmembrane subunits of the mitochondrial respiratory chain. The mitoribosomes are attached to the mitochondrial inner membrane and translation products are cotranslationally integrated into the membrane. This Saccharomyces cerevisiae (strain ATCC 204508 / S288c) (Baker's yeast) protein is Small ribosomal subunit protein uS4m (NAM9).